A 504-amino-acid polypeptide reads, in one-letter code: Probable phenylalanine--tRNA ligase beta subunit (504 aa).

The B5 domain maps to 270–346 (IKDKSYLLSI…ICYGFNNINM (77 aa)). Asp324, Asp330, Glu333, and Asp334 together coordinate Mg(2+).

It belongs to the phenylalanyl-tRNA synthetase beta subunit family. Type 2 subfamily. In terms of assembly, tetramer of two alpha and two beta subunits. Requires Mg(2+) as cofactor.

Its subcellular location is the cytoplasm. It carries out the reaction tRNA(Phe) + L-phenylalanine + ATP = L-phenylalanyl-tRNA(Phe) + AMP + diphosphate + H(+). The sequence is that of Probable phenylalanine--tRNA ligase beta subunit from Vairimorpha ceranae (strain BRL01) (Microsporidian parasite).